The following is a 209-amino-acid chain: uncharacterized protein (209 aa).

4Fe-4S ferredoxin-type domains are found at residues 38 to 67, 63 to 92, 90 to 119, 122 to 151, 145 to 174, and 179 to 209; these read KTKP…IFSF, KIFS…KDRF, DRFT…KEIP, KTPV…EINP, INKE…TPDE, and LIVK…HRES. Residues C47, C50, C53, C57, C72, C75, C78, C82, C99, C102, C105, and C109 each contribute to the [4Fe-4S] cluster site. The [4Fe-4S] cluster site is built by C154, C157, C160, C164, C188, C191, C194, and C198.

This is an uncharacterized protein from Methanocaldococcus jannaschii (strain ATCC 43067 / DSM 2661 / JAL-1 / JCM 10045 / NBRC 100440) (Methanococcus jannaschii).